Here is a 226-residue protein sequence, read N- to C-terminus: MAKKLTKKTKAALGSFDPKQIYDLDKAIEIAKKTATTKFESSIDIAIKLNLDTTKADQQLRGAISLPHNVSKPIRILAITDQQAEAKQAGADFVGEIDKINEIKAGWMDFDVIITNPKFMIELGKLGKILGPKGLMPNPKTGTVTQDIATAITEYRKGKKEYRTDTFGNIHMTVGKQSTDTNKIVENANALIDLIKSRRPSAVKGVYIQNISVSSTMGPGVKVKIN.

It belongs to the universal ribosomal protein uL1 family. Part of the 50S ribosomal subunit.

Its function is as follows. Binds directly to 23S rRNA. The L1 stalk is quite mobile in the ribosome, and is involved in E site tRNA release. In terms of biological role, protein L1 is also a translational repressor protein, it controls the translation of the L11 operon by binding to its mRNA. This chain is Large ribosomal subunit protein uL1, found in Mycoplasmoides gallisepticum (strain R(low / passage 15 / clone 2)) (Mycoplasma gallisepticum).